The chain runs to 547 residues: uncharacterized protein (547 aa).

Residues 38–50 (RNLPFHREREKVE) show a composition bias toward basic and acidic residues. Residues 38-89 (RNLPFHREREKVESNPNSSDEEDLTSTNNTRSSDNTTSDTEDDSGEDSYQVE) form a disordered region. Residues 62–75 (TSTNNTRSSDNTTS) are compositionally biased toward low complexity. 12 consecutive transmembrane segments (helical) span residues 108-128 (IYTL…SSIF), 148-168 (LCSA…APLS), 174-194 (LPLY…GGCS), 197-217 (IWSL…PMSA), 233-253 (GALL…PVMG), 265-285 (WDFW…CFTM), 346-366 (MYLV…PLIF), 377-397 (GLAI…TPII), 418-438 (LFPL…LGWT), 445-465 (WAAP…VLAV), 478-500 (AASA…TIVA), and 514-534 (SLLA…FFWG).

Belongs to the major facilitator superfamily. CAR1 family.

It localises to the membrane. This is an uncharacterized protein from Schizosaccharomyces pombe (strain 972 / ATCC 24843) (Fission yeast).